The following is a 310-amino-acid chain: Probable mitochondrial import receptor subunit TOM40-2 (310 aa).

M1 is modified (N-acetylmethionine).

It belongs to the Tom40 family. Forms part of the preprotein translocase complex of the outer mitochondrial membrane (TOM complex) which consists of at least 6 different proteins (TOM5, TOM6, TOM7, TOM20, TOM22/TOM9 and TOM40). Present in a large lipid-enriched complex called mitochondrial transmembrane lipoprotein (MTL) complex made of proteins located in the two mitochondrial membranes, including the TOM complex and the core components of the MICOS complex and containing at least digalactosyldiacylglycerol (DGDG). Binds to MIC60. Component of a mitochondrial large protein complex that contains, at least, MIC60, DGS1, TOM40, TOM20 proteins, and petC/RISP. As to expression, expressed in roots, flowers, young cotyledons and leaves.

Its subcellular location is the mitochondrion outer membrane. In terms of biological role, central component of the receptor complex responsible for the recognition and translocation of cytosolically synthesized mitochondrial preproteins. Together with TOM22 functions as the transit peptide receptor at the surface of the mitochondrion outer membrane and facilitates the movement of preproteins into the translocation pore. Directly involved in the pore formation. This is Probable mitochondrial import receptor subunit TOM40-2 from Arabidopsis thaliana (Mouse-ear cress).